The following is a 160-amino-acid chain: Large ribosomal subunit protein uL10 (160 aa).

It belongs to the universal ribosomal protein uL10 family. In terms of assembly, part of the ribosomal stalk of the 50S ribosomal subunit. The N-terminus interacts with L11 and the large rRNA to form the base of the stalk. The C-terminus forms an elongated spine to which L12 dimers bind in a sequential fashion forming a multimeric L10(L12)X complex.

Its function is as follows. Forms part of the ribosomal stalk, playing a central role in the interaction of the ribosome with GTP-bound translation factors. In Wolinella succinogenes (strain ATCC 29543 / DSM 1740 / CCUG 13145 / JCM 31913 / LMG 7466 / NCTC 11488 / FDC 602W) (Vibrio succinogenes), this protein is Large ribosomal subunit protein uL10.